Consider the following 149-residue polypeptide: Large ribosomal subunit protein uL11 (149 aa).

This sequence belongs to the universal ribosomal protein uL11 family. As to quaternary structure, part of the ribosomal stalk of the 50S ribosomal subunit. Interacts with L10 and the large rRNA to form the base of the stalk. L10 forms an elongated spine to which L12 dimers bind in a sequential fashion forming a multimeric L10(L12)X complex. Post-translationally, one or more lysine residues are methylated.

Functionally, forms part of the ribosomal stalk which helps the ribosome interact with GTP-bound translation factors. This Methylobacterium nodulans (strain LMG 21967 / CNCM I-2342 / ORS 2060) protein is Large ribosomal subunit protein uL11.